The chain runs to 223 residues: uncharacterized protein (223 aa).

Helical transmembrane passes span 28–48 (LSNT…GLIT), 59–79 (LIVQ…ITLA), 88–108 (AFNQ…MFFI), 128–148 (IVGL…VWLS), and 176–196 (AWAI…YMIV).

It localises to the cell membrane. This is an uncharacterized protein from Mycoplasma pneumoniae (strain ATCC 29342 / M129 / Subtype 1) (Mycoplasmoides pneumoniae).